A 360-amino-acid polypeptide reads, in one-letter code: Thiol protease SEN102 (360 aa).

The N-terminal stretch at 1 to 20 (MAKPKFIALALVALSFLSIA) is a signal peptide. Positions 21–133 (QSIPFTEKDL…ENVGSLPAAS (113 aa)) are cleaved as a propeptide — activation peptide. 3 cysteine pairs are disulfide-bonded: C151–C193, C185–C225, and C283–C335. The active site involves C154. Catalysis depends on residues H289 and N310. An N-linked (GlcNAc...) asparagine glycan is attached at N353. The Prevents secretion from ER motif lies at 357-360 (RDEL).

The protein belongs to the peptidase C1 family.

The protein localises to the endoplasmic reticulum lumen. This is Thiol protease SEN102 (SEN102) from Hemerocallis sp. (Daylily).